The following is a 203-amino-acid chain: Ras-related protein Rab-8B (203 aa).

GTP is bound by residues 22-29, 70-74, and 128-131; these read GDSGVGKS, DTAGQ, and NKCD. S-geranylgeranyl cysteine attachment occurs at residues C202 and C203.

Belongs to the small GTPase superfamily. Rab family.

The protein localises to the cell membrane. Functionally, protein transport. Probably involved in vesicular traffic. This chain is Ras-related protein Rab-8B (rab8B), found in Dictyostelium discoideum (Social amoeba).